Reading from the N-terminus, the 246-residue chain is DNA polymerase sliding clamp (246 aa).

Belongs to the PCNA family. In terms of assembly, homotrimer. The subunits circularize to form a toroid; DNA passes through its center. Replication factor C (RFC) is required to load the toroid on the DNA.

Sliding clamp subunit that acts as a moving platform for DNA processing. Responsible for tethering the catalytic subunit of DNA polymerase and other proteins to DNA during high-speed replication. In Thermoplasma volcanium (strain ATCC 51530 / DSM 4299 / JCM 9571 / NBRC 15438 / GSS1), this protein is DNA polymerase sliding clamp.